We begin with the raw amino-acid sequence, 257 residues long: Phosphonates import ATP-binding protein PhnC (257 aa).

The ABC transporter domain maps to 7 to 251 (IQLKDVSKIY…VFTDIYNGGD (245 aa)). ATP is bound at residue 40–47 (GLSGAGKS).

This sequence belongs to the ABC transporter superfamily. Phosphonates importer (TC 3.A.1.9.1) family. The complex is composed of two ATP-binding proteins (PhnC), two transmembrane proteins (PhnE) and a solute-binding protein (PhnD).

The protein localises to the cell membrane. It carries out the reaction phosphonate(out) + ATP + H2O = phosphonate(in) + ADP + phosphate + H(+). Functionally, part of the ABC transporter complex PhnCDE involved in phosphonates import. Responsible for energy coupling to the transport system. This Lactobacillus acidophilus (strain ATCC 700396 / NCK56 / N2 / NCFM) protein is Phosphonates import ATP-binding protein PhnC.